Consider the following 629-residue polypeptide: DNA mismatch repair protein MutL (629 aa).

Belongs to the DNA mismatch repair MutL/HexB family.

Functionally, this protein is involved in the repair of mismatches in DNA. It is required for dam-dependent methyl-directed DNA mismatch repair. May act as a 'molecular matchmaker', a protein that promotes the formation of a stable complex between two or more DNA-binding proteins in an ATP-dependent manner without itself being part of a final effector complex. The polypeptide is DNA mismatch repair protein MutL (Rhodospirillum rubrum (strain ATCC 11170 / ATH 1.1.1 / DSM 467 / LMG 4362 / NCIMB 8255 / S1)).